A 294-amino-acid chain; its full sequence is MSQTDASCTIAELPYRSVTDLVVLDFPRPEVALITLNRPGRMNSMALDLMKSLKQVLKRITYDHSVRVVVLTGAGRGFCSGADQKFTAPVPQVEGLTQPVRALRAMELLEEVILALRRLHQPVIAAINGPAIGGGLCLALAADVRVASTRAYFRAAGINNGLSASELGLSYLLPRAVGSSRAFEIMLSGRDVGAEEAEQIGLVSYRVSDDRLLDTCYSIAARMATFSRSGTELTKRALWGGLDAASLDKHMQSESLAQLFIALHTSNFEEAAAPCTEKRPTVLVDARGCATSPG.

It belongs to the enoyl-CoA hydratase/isomerase family.

It catalyses the reaction a (3S)-3-hydroxyacyl-CoA = a (2E)-enoyl-CoA + H2O. The enzyme catalyses a 4-saturated-(3S)-3-hydroxyacyl-CoA = a (3E)-enoyl-CoA + H2O. In terms of biological role, could possibly oxidize fatty acids using specific components. In Mycobacterium leprae (strain TN), this protein is Probable enoyl-CoA hydratase echA12 (echA12).